The sequence spans 178 residues: Interleukin-10 (178 aa).

An N-terminal signal peptide occupies residues 1 to 18 (MPGSALLCCLALLAGVKA). Intrachain disulfides connect C30-C126 and C80-C132. Residue N67 is glycosylated (N-linked (GlcNAc...) asparagine). N-linked (GlcNAc...) asparagine glycosylation occurs at N134.

It belongs to the IL-10 family. Homodimer. Interacts with IL10RA and IL10RB.

It is found in the secreted. Major immune regulatory cytokine that acts on many cells of the immune system where it has profound anti-inflammatory functions, limiting excessive tissue disruption caused by inflammation. Mechanistically, IL10 binds to its heterotetrameric receptor comprising IL10RA and IL10RB leading to JAK1 and STAT2-mediated phosphorylation of STAT3. In turn, STAT3 translocates to the nucleus where it drives expression of anti-inflammatory mediators. Targets antigen-presenting cells (APCs) such as macrophages and monocytes and inhibits their release of pro-inflammatory cytokines including granulocyte-macrophage colony-stimulating factor /GM-CSF, granulocyte colony-stimulating factor/G-CSF, IL-1 alpha, IL-1 beta, IL-6, IL-8 and TNF-alpha. Also interferes with antigen presentation by reducing the expression of MHC-class II and co-stimulatory molecules, thereby inhibiting their ability to induce T cell activation. In addition, controls the inflammatory response of macrophages by reprogramming essential metabolic pathways including mTOR signaling. This is Interleukin-10 (IL10) from Cavia porcellus (Guinea pig).